A 1367-amino-acid polypeptide reads, in one-letter code: Probable serine/threonine-protein kinase pkgA (1367 aa).

Disordered regions lie at residues 140–164 (IDEN…NKTI), 264–429 (KNGK…LLSR), 456–556 (PTPL…SRKP), and 771–792 (PREE…SDPV). The span at 143–162 (NNNNNNNNNNNNNNNNNKNK) shows a compositional bias: low complexity. The span at 271-282 (IKRPSPPLPPPQ) shows a compositional bias: pro residues. Residues 287-326 (EQQKEQKEQQKEQQKEQQKEQQKEQEQKQQEPQKYVKFEI) are compositionally biased toward basic and acidic residues. Residues 340-381 (ISSSNISNEISKQQQQQQQQQQQQQQQQQQQQQQQQQQQQQQ) show a composition bias toward low complexity. Polar residues predominate over residues 399–421 (ANNNILTTPLSSQPTQSLETPST). A compositionally biased stretch (acidic residues) spans 506-517 (GEDEEEDEDDDN). Over residues 531–544 (LKNKRPFKKTHVHH) the composition is skewed to basic residues. One can recognise a Protein kinase domain in the interval 810–1236 (FEFIKPITKG…AEEIKSHPFF (427 aa)). ATP is bound by residues 816–824 (ITKGGYGKV) and K839. D933 serves as the catalytic Proton acceptor. Disordered stretches follow at residues 971-1034 (FSPT…PSNT), 1084-1134 (FIPP…HNIH), and 1288-1312 (QNQN…TATA). Residues 979–1015 (NNQSSSSSSVSNIGGSNTIGSNISSTNNNNNNNNTTG) are compositionally biased toward low complexity. Residues 1025–1034 (NTETPIPSNT) show a composition bias toward polar residues. 2 stretches are compositionally biased toward low complexity: residues 1092 to 1125 (QQPI…QQTT) and 1294 to 1312 (SSTI…TATA). Residues 1237-1347 (KSINWKTILT…VNFQSLLELN (111 aa)) enclose the AGC-kinase C-terminal domain.

Belongs to the protein kinase superfamily. AGC Ser/Thr protein kinase family.

The enzyme catalyses L-seryl-[protein] + ATP = O-phospho-L-seryl-[protein] + ADP + H(+). It carries out the reaction L-threonyl-[protein] + ATP = O-phospho-L-threonyl-[protein] + ADP + H(+). The protein is Probable serine/threonine-protein kinase pkgA (pkgA) of Dictyostelium discoideum (Social amoeba).